The chain runs to 787 residues: Signal transducer and activator of transcription 5B (787 aa).

The residue at position 90 (Tyr-90) is a Phosphotyrosine. Phosphoserine is present on residues Ser-128 and Ser-193. The interval 232 to 321 (KHQKTLQLLR…MLAEVNATIT (90 aa)) is required for interaction with NMI. Residues 589 to 686 (WNDGAILGFV…EVYSKYYTPV (98 aa)) form the SH2 domain. A Phosphotyrosine modification is found at Tyr-682. Residue Tyr-699 is modified to Phosphotyrosine; by HCK, JAK and PTK6.

The protein belongs to the transcription factor STAT family. As to quaternary structure, upon activation, forms homodimers. Forms also heterodimers with related family members. Binds NR3C1. Interacts with NCOA1. Interacts with NMI. Interacts with SOCS7. Interacts (via SH2 domain) with INSR. Interacts with CPEB3; this inhibits STAT5B-mediated transcriptional activation. In terms of processing, tyrosine phosphorylated in response to signaling via activated KIT, resulting in translocation to the nucleus. Tyrosine phosphorylated in response to signaling via activated FLT3; wild-type FLT3 results in much weaker phosphorylation than constitutively activated mutant FLT3. Alternatively, can be phosphorylated by JAK2. Phosphorylation at Tyr-699 by PTK6 or HCK leads to an increase of its transcriptional activity.

The protein resides in the cytoplasm. It is found in the nucleus. Carries out a dual function: signal transduction and activation of transcription. Mediates cellular responses to the cytokine KITLG/SCF and other growth factors. Binds to the GAS element and activates PRL-induced transcription. Positively regulates hematopoietic/erythroid differentiation. The sequence is that of Signal transducer and activator of transcription 5B (STAT5B) from Homo sapiens (Human).